A 332-amino-acid polypeptide reads, in one-letter code: 2-hydroxyacid dehydrogenase homolog 2 (332 aa).

NAD(+) is bound by residues 154–155, 233–235, and D259; these read KI and TSR. The active site involves R235. E264 is a catalytic residue. H296 functions as the Proton donor in the catalytic mechanism. 296–299 lines the NAD(+) pocket; it reads HQAF.

It belongs to the D-isomer specific 2-hydroxyacid dehydrogenase family.

The protein resides in the cytoplasm. It localises to the nucleus. The chain is 2-hydroxyacid dehydrogenase homolog 2 from Schizosaccharomyces pombe (strain 972 / ATCC 24843) (Fission yeast).